The chain runs to 553 residues: T-complex protein 1 subunit eta (553 aa).

Gly41 contributes to the ADP binding site. Gly41 serves as a coordination point for ATP. Asp92 serves as a coordination point for Mg(2+). 6 residues coordinate ADP: Gly93, Thr94, Thr95, Ser96, Ser164, and Ser165. Gly93 provides a ligand contact to ATP. Ser96 is an ATP binding site. The ATP site is built by Arg398 and Gly409. ADP is bound by residues Gly409, Glu494, and Arg499. Arg499 is a binding site for ATP. The interval 523–553 (PRSTVDAPPGGRGRGRGQTPQPLRPRSVALS) is disordered. Residues 539–553 (GQTPQPLRPRSVALS) show a composition bias toward low complexity.

Component of the chaperonin-containing T-complex (TRiC), a hexadecamer composed of two identical back-to-back stacked rings enclosing a protein folding chamber. Each ring is made up of eight different subunits: TCP1/CCT1, CCT2, CCT3, CCT4, CCT5, CCT6A/CCT6, CCT7, CCT8.

Its subcellular location is the cytoplasm. The catalysed reaction is ATP + H2O = ADP + phosphate + H(+). Component of the chaperonin-containing T-complex (TRiC), a molecular chaperone complex that assists the folding of actin, tubulin and other proteins upon ATP hydrolysis. In Gallus gallus (Chicken), this protein is T-complex protein 1 subunit eta.